The following is a 227-amino-acid chain: Large ribosomal subunit protein uL3 (227 aa).

Position 151 is an N5-methylglutamine (glutamine 151).

It belongs to the universal ribosomal protein uL3 family. In terms of assembly, part of the 50S ribosomal subunit. Forms a cluster with proteins L14 and L19. Post-translationally, methylated by PrmB.

One of the primary rRNA binding proteins, it binds directly near the 3'-end of the 23S rRNA, where it nucleates assembly of the 50S subunit. This is Large ribosomal subunit protein uL3 from Gluconacetobacter diazotrophicus (strain ATCC 49037 / DSM 5601 / CCUG 37298 / CIP 103539 / LMG 7603 / PAl5).